A 452-amino-acid chain; its full sequence is UPF0210 protein PTH_0987 (452 aa).

Belongs to the UPF0210 family. Homodimer.

This chain is UPF0210 protein PTH_0987, found in Pelotomaculum thermopropionicum (strain DSM 13744 / JCM 10971 / SI).